Here is a 299-residue protein sequence, read N- to C-terminus: tRNA dimethylallyltransferase (299 aa).

Residue 11 to 18 (GPTAVGKT) participates in ATP binding. 13 to 18 (TAVGKT) contacts substrate. Residues 36-39 (DSQQ) form an interaction with substrate tRNA region.

The protein belongs to the IPP transferase family. Monomer. Mg(2+) serves as cofactor.

It carries out the reaction adenosine(37) in tRNA + dimethylallyl diphosphate = N(6)-dimethylallyladenosine(37) in tRNA + diphosphate. In terms of biological role, catalyzes the transfer of a dimethylallyl group onto the adenine at position 37 in tRNAs that read codons beginning with uridine, leading to the formation of N6-(dimethylallyl)adenosine (i(6)A). The protein is tRNA dimethylallyltransferase of Streptococcus pyogenes serotype M28 (strain MGAS6180).